We begin with the raw amino-acid sequence, 154 residues long: Fucose mutarotase (154 aa).

His-24 serves as the catalytic Proton donor. Asp-32 lines the substrate pocket. Asp-69 is a catalytic residue. Substrate-binding residues include Met-79, Tyr-120, Tyr-138, and Asn-140. Tyr-120 is an active-site residue.

The protein belongs to the RbsD / FucU family. Mainly homodimer, but also exists as homotetramer, homooctamer, and homodecamer. The homodimeric form seems catalytically inactive.

The enzyme catalyses alpha-L-fucose = beta-L-fucose. It participates in carbohydrate metabolism; L-fucose metabolism. In terms of biological role, involved in the interconversion between alpha- and beta-L-fucoses. L-Fucose (6-deoxy-L-galactose) exists as alpha-L-fucose (29.5%) and beta-L-fucose (70.5%), the beta-form is metabolized through the salvage pathway. GDP-L-fucose formed either by the de novo or salvage pathways is transported into the endoplasmic reticulum, where it serves as a substrate for N- and O-glycosylations by fucosyltransferases. Fucosylated structures expressed on cell surfaces or secreted in biological fluids are believed to play a critical role in cell-cell adhesion and recognition processes. The chain is Fucose mutarotase (FUOM) from Homo sapiens (Human).